Consider the following 201-residue polypeptide: RILP-like protein 2 (201 aa).

Residues 14–108 (GPEIALDKDP…LKDGPQMGVG (95 aa)) form the RH1 domain. The stretch at 67–155 (LEMLEALVNQ…AQDELQCYKS (89 aa)) forms a coiled coil. The region spanning 121 to 197 (RPRFTLQELR…TVKSLFSFKQ (77 aa)) is the RH2 domain. The disordered stretch occupies residues 177 to 201 (SPRENESKEKSTVKSLFSFKQGKQT). Residues 179 to 188 (RENESKEKST) are compositionally biased toward basic and acidic residues.

Belongs to the RILPL family.

Its subcellular location is the cytoplasm. It localises to the cytosol. The protein localises to the cytoskeleton. It is found in the microtubule organizing center. The protein resides in the centrosome. Its subcellular location is the cell projection. It localises to the cilium. Its function is as follows. Involved in cell shape and neuronal morphogenesis, positively regulating the establishment and maintenance of dendritic spines. Plays a role in cellular protein transport. The chain is RILP-like protein 2 (rilpl2) from Xenopus tropicalis (Western clawed frog).